The chain runs to 389 residues: MASEIMTLNMGPQHPSTHGVLRLVVELDGEVIQKITPHIGYLHRGIEKLSEHRTYHQALPLTDRMDYLAPMHNNLGYVLAVEKLLGIEVPERAETIRVIMAELTRLKSHLVWIACHALDIGAMTVFIYAFREREKIMELYEMVSGARMTSNYFRVGGLSRDLPAGFESAVQEILDTFPGHFDTYEGLLTKNTIWLQRTIGNGVISADDAIDFGISGPALRGSGVDFDLRRDLPYSGYEKYDFKVPVGENCDTFDRYKVRLVEMREAVKIIDQAMKRLKPGPILADAPQVCYPPKESVYNSIEGLIHHFKIASEGFPVPEGEVYQGVENPKGELGYYMVSDGGSKPYRMRVRPPSFVNLGAIEKMAKGSMIADLVAVIGTLDIVLGEIDR.

Belongs to the complex I 49 kDa subunit family. As to quaternary structure, NDH-1 is composed of 14 different subunits. Subunits NuoB, C, D, E, F, and G constitute the peripheral sector of the complex.

It localises to the cell inner membrane. The enzyme catalyses a quinone + NADH + 5 H(+)(in) = a quinol + NAD(+) + 4 H(+)(out). In terms of biological role, NDH-1 shuttles electrons from NADH, via FMN and iron-sulfur (Fe-S) centers, to quinones in the respiratory chain. The immediate electron acceptor for the enzyme in this species is believed to be ubiquinone. Couples the redox reaction to proton translocation (for every two electrons transferred, four hydrogen ions are translocated across the cytoplasmic membrane), and thus conserves the redox energy in a proton gradient. This Citrifermentans bemidjiense (strain ATCC BAA-1014 / DSM 16622 / JCM 12645 / Bem) (Geobacter bemidjiensis) protein is NADH-quinone oxidoreductase subunit D.